The primary structure comprises 642 residues: DNA gyrase subunit B (642 aa).

Residues 422–536 (CELFIVEGDS…AGYVYIAQPP (115 aa)) form the Toprim domain. Positions 428, 501, and 503 each coordinate Mg(2+).

This sequence belongs to the type II topoisomerase family. In terms of assembly, heterotetramer, composed of two GyrA and two GyrB chains. Within the heterotetramer, GyrA contains the active site tyrosine that forms a covalent intermediate with the DNA, while GyrB contributes the cofactor binding sites and catalyzes ATP hydrolysis. The cofactor is Mg(2+). Requires Mn(2+) as cofactor. Ca(2+) is required as a cofactor.

The protein localises to the cytoplasm. It catalyses the reaction ATP-dependent breakage, passage and rejoining of double-stranded DNA.. With respect to regulation, pyrrolopyrimidines inhibit both GyrB and its paralog in topoisomerase IV (parE). Functionally, DNA gyrase negatively supercoils closed circular double-stranded DNA in an ATP-dependent manner and also catalyzes the interconversion of other topological isomers of double-stranded DNA rings, including catenanes and knotted rings. This is DNA gyrase subunit B from Enterococcus faecalis (strain ATCC 700802 / V583).